The following is a 145-amino-acid chain: Small ribosomal subunit protein uS12 (145 aa).

At Pro64 the chain carries Hydroxyproline.

Belongs to the universal ribosomal protein uS12 family.

In Aspergillus fumigatus (strain ATCC MYA-4609 / CBS 101355 / FGSC A1100 / Af293) (Neosartorya fumigata), this protein is Small ribosomal subunit protein uS12 (rps23).